Consider the following 1021-residue polypeptide: MKFFALFIYRPVATILLSVAITLCGILGFRMLPVAPLPQVDFPVIMVSASLPGASPETMASSVATPLERSLGRIAGVSEMTSSSSLGSTRIILQFDFDRDINGAARDVQAAINAAQSLLPSGMPSRPTYRKANPSDAPIMILTLTSDTYSQGELYDFASTQLAPTISQIDGVGDVDVGGSSLPAVRVGLTPQALFNQGVSLDDVRTAISNANVRKPQGALEDGTHRWQIQTNDELKTAAEYQPLIIHYNNGGAVRLGDVATVTDSVQDVRNAGMTNAKPAILLMIRKLPEANIIQTVDSIRAKLPELQETIPAAIDLQIAQDRSPTIRASLEEVEQTLIISVALVILVVFLFLRSGRATIIPAVAVPVSLIGTFAAMYLCGFSLNNLSLMALTIATGFVVDDAIVVLENIARHLEAGMKPLQAALQGTREVGFTVLSMSLSLVAVFLPLLLMGGLPGRLLREFAVTLSVAIGISLLVSLTLTPMMCGWMLKASKPREQKRLRGFGRMLVALQQGYGKSLKWVLNHTRLVGVVLLGTIALNISIPKTFFPEQDTGVLMGGIQADQSISFQAMRGKLQDFMKIIRDDPAVDNVTGFTGGSRVSSGMMFITLKPRDERSETAQQIIDRLRVKLAKEPGANLFLMAVQDIRVGGRQSNASYQYTLLSDDLAALREWEPKIRKKLATLPELADVNSDQQDNGAEMNLVYDRDTMARLGIDVQAANSLLNNAFGQRQISTIYQPMNQYKVVMEVDPRYTQDISALEKMFVINNEGKAIPLSYFAKWQPANAPLSVNHQGLSAASTISFNLPTGKSLSDASAAIDRAMTQLGVPSTVRGSFAGTAQVFQETMNSQVILIIAAIATVYIVLGILYESYVHPLTILSTLPSAGVGALLALELFNAPFSLIALIGIMLLIGIVKKNAIMMVDFALEAQRHGNLTPQEAIFQACLLRFRPIMMTTLAALFGALPLVLSGGDGSELRQPLEITIVGGLVMSQLLTLYTTPVVYLFFDRLRLRFSRKPKQTVTE.

Residues 1-6 (MKFFAL) are Cytoplasmic-facing. Residues 7-29 (FIYRPVATILLSVAITLCGILGF) traverse the membrane as a helical segment. Topologically, residues 30 to 335 (RMLPVAPLPQ…TIRASLEEVE (306 aa)) are periplasmic. A helical membrane pass occupies residues 336–353 (QTLIISVALVILVVFLFL). Residues 354–359 (RSGRAT) are Cytoplasmic-facing. The chain crosses the membrane as a helical span at residues 360 to 379 (IIPAVAVPVSLIGTFAAMYL). Topologically, residues 380–388 (CGFSLNNLS) are periplasmic. Residues 389–411 (LMALTIATGFVVDDAIVVLENIA) traverse the membrane as a helical segment. Residues 412–430 (RHLEAGMKPLQAALQGTRE) are Cytoplasmic-facing. The helical transmembrane segment at 431–453 (VGFTVLSMSLSLVAVFLPLLLMG) threads the bilayer. At 454-467 (GLPGRLLREFAVTL) the chain is on the periplasmic side. Residues 468-490 (SVAIGISLLVSLTLTPMMCGWML) traverse the membrane as a helical segment. At 491–848 (KASKPREQKR…QVFQETMNSQ (358 aa)) the chain is on the cytoplasmic side. Residues 849-871 (VILIIAAIATVYIVLGILYESYV) form a helical membrane-spanning segment. Residues 872–890 (HPLTILSTLPSAGVGALLA) are Periplasmic-facing. The chain crosses the membrane as a helical span at residues 891–913 (LELFNAPFSLIALIGIMLLIGIV). Residues 914-943 (KKNAIMMVDFALEAQRHGNLTPQEAIFQAC) are Cytoplasmic-facing. The helical transmembrane segment at 944 to 966 (LLRFRPIMMTTLAALFGALPLVL) threads the bilayer. Residues 967-980 (SGGDGSELRQPLEI) lie on the Periplasmic side of the membrane. The chain crosses the membrane as a helical span at residues 981-1003 (TIVGGLVMSQLLTLYTTPVVYLF). At 1004 to 1021 (FDRLRLRFSRKPKQTVTE) the chain is on the cytoplasmic side.

This sequence belongs to the resistance-nodulation-cell division (RND) (TC 2.A.6) family. MdtC subfamily. In terms of assembly, part of a tripartite efflux system composed of MdtA, MdtB and MdtC. MdtC forms a heteromultimer with MdtB.

It is found in the cell inner membrane. This is Multidrug resistance protein MdtC from Shigella flexneri.